The sequence spans 306 residues: Aspartate carbamoyltransferase catalytic subunit (306 aa).

2 residues coordinate carbamoyl phosphate: Arg54 and Thr55. Position 83 (Lys83) interacts with L-aspartate. Residues Arg104, His132, and Gln135 each contribute to the carbamoyl phosphate site. The L-aspartate site is built by Arg165 and Arg227. Residues Leu266 and Pro267 each coordinate carbamoyl phosphate.

The protein belongs to the aspartate/ornithine carbamoyltransferase superfamily. ATCase family. Heterododecamer (2C3:3R2) of six catalytic PyrB chains organized as two trimers (C3), and six regulatory PyrI chains organized as three dimers (R2).

The catalysed reaction is carbamoyl phosphate + L-aspartate = N-carbamoyl-L-aspartate + phosphate + H(+). It functions in the pathway pyrimidine metabolism; UMP biosynthesis via de novo pathway; (S)-dihydroorotate from bicarbonate: step 2/3. In terms of biological role, catalyzes the condensation of carbamoyl phosphate and aspartate to form carbamoyl aspartate and inorganic phosphate, the committed step in the de novo pyrimidine nucleotide biosynthesis pathway. The protein is Aspartate carbamoyltransferase catalytic subunit of Clostridium novyi (strain NT).